A 264-amino-acid chain; its full sequence is 5'-nucleotidase SurE (264 aa).

4 residues coordinate a divalent metal cation: D10, D11, S43, and N99.

This sequence belongs to the SurE nucleotidase family. A divalent metal cation serves as cofactor.

It localises to the cytoplasm. The enzyme catalyses a ribonucleoside 5'-phosphate + H2O = a ribonucleoside + phosphate. Nucleotidase that shows phosphatase activity on nucleoside 5'-monophosphates. This chain is 5'-nucleotidase SurE, found in Methanococcus vannielii (strain ATCC 35089 / DSM 1224 / JCM 13029 / OCM 148 / SB).